We begin with the raw amino-acid sequence, 938 residues long: MSHTPHNRRHESERLSATIRFLGNLLGDVIREQAGEAAFQLVERLRTLGKELRNGAPDRADAELRMMAARMTVADIQIVIKAFNAYFLLVNLAEQMQRVWVLRDRERKYPDTPRPESIAAAIAELHACGIPATTIQEWLDTACIQPVFTAHPTEARRRTALEKVRRLATLLDERTGDLHGFVREENTMRIREEIVSLWQTDEVRVVKPTVIDEVKNGMFYFESGLFDLIPRLYRELEYALRTTYPTHEWRVPPLLRYGAWMGGDRDGNPNVTHTVTIQAVRMMRAAAIERHIAAVEELSHRLGQSVRQAPVSDELRESLAHDASLFPEVADMLARRNPYELYRQKCTYIREKLIRTLDYARTASLDWGRSDSPPKGAYFSRTDLLDDLHVMERSLLSNNAAIVANGALRDLIRQAEVFGLHTATLDIRQHSERHTAALAEVLAAAGVCADYTALNEIERIELLSREIENPRPLIPTRLDYSPDTVEVIATFRAVASILERLSPEAVETCIVSMTRGASDLLAPLLLAKEAGLFRPFRFSRLSMAPLFETGADLACCDEVLEACMRLPIYRNHLALRGFVQEVMIGYSDSNKDVGYAAANWAIYQAQRKLRDFGRRHGIQMRLFHGRGGAIGRGGGPANHAILAQPPGSIGNQIKITEQGEVIADRYGLPLLAHRHIEQVINAVLRAGLLQRDDPPDEWTQALERLAALSQRHYRALVYERSDFVPYFRNVTPIAEISRLNIGSRPASRRNTERIEDLRAIPWVFSWMQSRHTLPGWYGLGFALETFVYAGEQSDASGSAIDRLALLQEMYARWSFFRVMIDNAQMILGKADLHIASRYAELAPDQNAAAAIFAAIREEYQRASRMIRQVARIERLLDNAPVLQHSIQRRNPYIDPMSYLQIELLRRLRAAPDGPDHAAIEDAILLSISGLAAGLMNTG.

Catalysis depends on residues His151 and Lys591.

Belongs to the PEPCase type 1 family. Mg(2+) serves as cofactor.

The catalysed reaction is oxaloacetate + phosphate = phosphoenolpyruvate + hydrogencarbonate. Functionally, forms oxaloacetate, a four-carbon dicarboxylic acid source for the tricarboxylic acid cycle. The polypeptide is Phosphoenolpyruvate carboxylase (Roseiflexus castenholzii (strain DSM 13941 / HLO8)).